Reading from the N-terminus, the 314-residue chain is tRNA dimethylallyltransferase (314 aa).

9 to 16 contacts ATP; the sequence is GPTAVGKT. 11-16 provides a ligand contact to substrate; the sequence is TAVGKT. Residues 34 to 37 are interaction with substrate tRNA; the sequence is DSMQ.

This sequence belongs to the IPP transferase family. As to quaternary structure, monomer. Mg(2+) serves as cofactor.

The enzyme catalyses adenosine(37) in tRNA + dimethylallyl diphosphate = N(6)-dimethylallyladenosine(37) in tRNA + diphosphate. In terms of biological role, catalyzes the transfer of a dimethylallyl group onto the adenine at position 37 in tRNAs that read codons beginning with uridine, leading to the formation of N6-(dimethylallyl)adenosine (i(6)A). This chain is tRNA dimethylallyltransferase, found in Clostridium tetani (strain Massachusetts / E88).